A 362-amino-acid chain; its full sequence is Large ribosomal subunit protein uL4A (362 aa).

The residue at position 2 (Ser-2) is an N-acetylserine. The residue at position 95 (Arg-95) is an Omega-N-methylarginine. A C-terminal-extended nuclear localization signal region spans residues Pro-277–Asp-362.

This sequence belongs to the universal ribosomal protein uL4 family. Component of the large ribosomal subunit (LSU). Mature yeast ribosomes consist of a small (40S) and a large (60S) subunit. The 40S small subunit contains 1 molecule of ribosomal RNA (18S rRNA) and 33 different proteins (encoded by 57 genes). The large 60S subunit contains 3 rRNA molecules (25S, 5.8S and 5S rRNA) and 46 different proteins (encoded by 81 genes). uL4 is associated with the polypeptide exit tunnel. uL4 interacts with its chaperone ACL4 and the nuclear import receptor KAP104. N-terminally acetylated by acetyltransferase NatA.

The protein localises to the cytoplasm. It localises to the nucleus. Its function is as follows. Component of the ribosome, a large ribonucleoprotein complex responsible for the synthesis of proteins in the cell. The small ribosomal subunit (SSU) binds messenger RNAs (mRNAs) and translates the encoded message by selecting cognate aminoacyl-transfer RNA (tRNA) molecules. The large subunit (LSU) contains the ribosomal catalytic site termed the peptidyl transferase center (PTC), which catalyzes the formation of peptide bonds, thereby polymerizing the amino acids delivered by tRNAs into a polypeptide chain. The nascent polypeptides leave the ribosome through a tunnel in the LSU and interact with protein factors that function in enzymatic processing, targeting, and the membrane insertion of nascent chains at the exit of the ribosomal tunnel. uL4 participates in the regulation of the accumulation of its own mRNA. The polypeptide is Large ribosomal subunit protein uL4A (Saccharomyces cerevisiae (strain ATCC 204508 / S288c) (Baker's yeast)).